We begin with the raw amino-acid sequence, 445 residues long: Glycine--tRNA ligase (445 aa).

Substrate is bound by residues arginine 97 and glutamate 145. ATP-binding positions include 177-179, 187-192, 262-263, and 308-311; these read RNE, FRTCEF, EV, and GLTR. 192 to 196 lines the substrate pocket; the sequence is FEQME. Residue 304-308 participates in substrate binding; sequence ETSAG.

This sequence belongs to the class-II aminoacyl-tRNA synthetase family. Homodimer.

Its subcellular location is the cytoplasm. It catalyses the reaction tRNA(Gly) + glycine + ATP = glycyl-tRNA(Gly) + AMP + diphosphate. Functionally, catalyzes the attachment of glycine to tRNA(Gly). This is Glycine--tRNA ligase from Borreliella burgdorferi (strain ATCC 35210 / DSM 4680 / CIP 102532 / B31) (Borrelia burgdorferi).